Consider the following 203-residue polypeptide: uncharacterized protein (203 aa).

The next 3 membrane-spanning stretches (helical) occupy residues 60–80, 114–134, and 157–177; these read IIDM…FFLY, WFQL…YFCT, and LQLG…ALIL. 192–199 contacts ATP; that stretch reads GAMSEGKT.

It is found in the membrane. This is an uncharacterized protein from Saccharomyces cerevisiae (strain ATCC 204508 / S288c) (Baker's yeast).